An 83-amino-acid chain; its full sequence is Mu-theraphotoxin-Hhn2j 2 (83 aa).

An N-terminal signal peptide occupies residues 1-21 (MKASMFLALAGLVLLFVVGYA). A propeptide spanning residues 22 to 48 (SESEEKEFPIELLSKIFAVDVFKGEDR) is cleaved from the precursor. Disulfide bonds link C50-C65, C57-C70, and C64-C77. The residue at position 81 (L81) is a Leucine amide.

The protein belongs to the neurotoxin 10 (Hwtx-1) family. 15 (Hntx-3) subfamily. Monomer. As to expression, expressed by the venom gland.

The protein resides in the secreted. Functionally, lethal neurotoxin. Selectively blocks tetrodotoxin-sensitive voltage-gated sodium channels (Nav). Does not affect tetrodotoxin-resistant voltage-gated sodium channels or calcium channels. The sequence is that of Mu-theraphotoxin-Hhn2j 2 from Cyriopagopus hainanus (Chinese bird spider).